We begin with the raw amino-acid sequence, 643 residues long: Extracellular metalloproteinase 4 (643 aa).

The signal sequence occupies residues 1-18 (MHGLMLAGLLALPLSVLG). The propeptide occupies 19–254 (HPTESHSSGI…VHSVVDYVSA (236 aa)). A compositionally biased stretch (basic and acidic residues) spans 47-57 (TKSDAVPKQDG). The tract at residues 47 to 73 (TKSDAVPKQDGESFTTSSTGNDNSSSG) is disordered. Residues 61–73 (TTSSTGNDNSSSG) are compositionally biased toward low complexity. 2 N-linked (GlcNAc...) asparagine glycosylation sites follow: Asn271 and Asn420. His437 lines the Zn(2+) pocket. Glu438 is a catalytic residue. His441 contacts Zn(2+). N-linked (GlcNAc...) asparagine glycosylation is found at Asn603 and Asn629.

It belongs to the peptidase M36 family. Zn(2+) serves as cofactor.

Its subcellular location is the secreted. Secreted metalloproteinase probably acting as a virulence factor. This chain is Extracellular metalloproteinase 4 (MEP4), found in Trichophyton rubrum (Athlete's foot fungus).